Here is a 659-residue protein sequence, read N- to C-terminus: Replication protein E1 (659 aa).

The tract at residues 30 to 57 (RTGDTVSSDEDEEEDGGEDLVDFIDDRP) is disordered. Residues 36-52 (SSDEDEEEDGGEDLVDF) are compositionally biased toward acidic residues. Residues 85 to 87 (KRK) carry the Nuclear localization signal motif. Ser-91, Ser-95, Ser-108, and Ser-121 each carry phosphoserine; by host. The Nuclear export signal motif lies at 107 to 116 (LSPRLDAIKL). A disordered region spans residues 134–195 (GYGQTQVDTE…DGEESQTESV (62 aa)). The span at 135-160 (YGQTQVDTESGPKQVQDICKTSQQDG) shows a compositional bias: polar residues. Residues 196 to 362 (QTDTTACGVL…QTVVGHALEE (167 aa)) form a DNA-binding region region. The SF3 helicase domain occupies 461-611 (VEFIPFLCAL…FPLTTQGEPL (151 aa)). Residue 487-494 (GPADTGKS) participates in ATP binding. A Glycyl lysine isopeptide (Lys-Gly) (interchain with G-Cter in SUMO) cross-link involves residue Lys-568. Positions 634 to 659 (DPEDEEDNGNTSEPFRCVPGQNTRTV) are disordered.

The protein belongs to the papillomaviridae E1 protein family. Can form hexamers. Interacts with E2 protein; this interaction increases E1 DNA binding specificity. Interacts with host DNA polymerase subunit POLA2. Interacts with host single stranded DNA-binding protein RPA1. Interacts with host TOP1; this interaction stimulates the enzymatic activity of TOP1. Post-translationally, phosphorylated. In terms of processing, sumoylated.

The protein localises to the host nucleus. The catalysed reaction is Couples ATP hydrolysis with the unwinding of duplex DNA by translocating in the 3'-5' direction.. The enzyme catalyses ATP + H2O = ADP + phosphate + H(+). Functionally, ATP-dependent DNA 3'-5' helicase required for initiation of viral DNA replication. It forms a complex with the viral E2 protein. The E1-E2 complex binds to the replication origin which contains binding sites for both proteins. During the initial step, a dimer of E1 interacts with a dimer of protein E2 leading to a complex that binds the viral origin of replication with high specificity. Then, a second dimer of E1 displaces the E2 dimer in an ATP-dependent manner to form the E1 tetramer. Following this, two E1 monomers are added to each half of the site, which results in the formation of two E1 trimers on the viral ori. Subsequently, two hexamers will be created. The double hexamer acts as a bi-directional helicase machinery and unwinds the viral DNA and then recruits the host DNA polymerase to start replication. The polypeptide is Replication protein E1 (Homo sapiens (Human)).